The chain runs to 633 residues: Threonine--tRNA ligase (633 aa).

Residues 1-61 form the TGS domain; sequence MINVYFSDNS…TEDCKFEVIT (61 aa). The interval 242-533 is catalytic; it reads DHRKIGKELE…LIEHHSGKLP (292 aa). The Zn(2+) site is built by C333, H384, and H510.

Belongs to the class-II aminoacyl-tRNA synthetase family. As to quaternary structure, homodimer. Zn(2+) is required as a cofactor.

The protein localises to the cytoplasm. It catalyses the reaction tRNA(Thr) + L-threonine + ATP = L-threonyl-tRNA(Thr) + AMP + diphosphate + H(+). Its function is as follows. Catalyzes the attachment of threonine to tRNA(Thr) in a two-step reaction: L-threonine is first activated by ATP to form Thr-AMP and then transferred to the acceptor end of tRNA(Thr). Also edits incorrectly charged L-seryl-tRNA(Thr). The protein is Threonine--tRNA ligase of Ehrlichia ruminantium (strain Welgevonden).